The following is a 212-amino-acid chain: Small ribosomal subunit protein uS19m (212 aa).

The transit peptide at 1 to 29 (MAFCTKLGGHWKQGVNVPVSSMLGSLRYM) directs the protein to the mitochondrion. The 79-residue stretch at 31-109 (TKLYIGGLSP…FNISVNVAKD (79 aa)) folds into the RRM domain.

It belongs to the universal ribosomal protein uS19 family. Component of the mitochondrial ribosome small subunit.

The protein resides in the mitochondrion. Its function is as follows. The RNA-binding domain found in RPS19 may functionally replace the missing mitochondrial RPS13. The protein is Small ribosomal subunit protein uS19m (RPS19) of Arabidopsis thaliana (Mouse-ear cress).